Here is a 100-residue protein sequence, read N- to C-terminus: Protein Tat (100 aa).

The disordered stretch occupies residues 1-20 (MEPVNPSLEPWKHPGSQPKT). Positions 1–24 (MEPVNPSLEPWKHPGSQPKTACTN) are interaction with human CREBBP. Residues 1 to 48 (MEPVNPSLEPWKHPGSQPKTACTNCYCKKCCFHCQACFITKGLGISYG) form a transactivation region. Positions 22, 25, and 27 each coordinate Zn(2+). Positions 22-37 (CTNCYCKKCCFHCQAC) are cysteine-rich. N6-acetyllysine; by host PCAF is present on K28. Residues C30, H33, C34, and C37 each contribute to the Zn(2+) site. The segment at 38 to 48 (FITKGLGISYG) is core. A disordered region spans residues 47-100 (YGRKKRRQRRRPPQDSQTHQVSLSKPSSQPRGDPTGPKEQKKKVERETETDPVH). Positions 48-57 (GRKKRRQRRR) are enriched in basic residues. The Nuclear localization signal, RNA-binding (TAR), and protein transduction motif lies at 49–57 (RKKRRQRRR). Positions 49-85 (RKKRRQRRRPPQDSQTHQVSLSKPSSQPRGDPTGPKE) are interaction with the host capping enzyme RNGTT. An N6-acetyllysine; by host EP300 and GCN5L2 mark is found at K50 and K51. 2 positions are modified to asymmetric dimethylarginine; by host PRMT6: R52 and R53. Positions 61-76 (DSQTHQVSLSKPSSQP) are enriched in polar residues. K71 is covalently cross-linked (Glycyl lysine isopeptide (Lys-Gly) (interchain with G-Cter in ubiquitin)). The Cell attachment site signature appears at 77 to 79 (RGD). Residues 82–100 (GPKEQKKKVERETETDPVH) are compositionally biased toward basic and acidic residues.

The protein belongs to the lentiviruses Tat family. As to quaternary structure, interacts with host CCNT1. Associates with the P-TEFb complex composed at least of Tat, P-TEFb (CDK9 and CCNT1), TAR RNA, RNA Pol II. Recruits the HATs CREBBP, TAF1/TFIID, EP300, PCAF and GCN5L2. Interacts with host KAT5/Tip60; this interaction targets the latter to degradation. Interacts with the host deacetylase SIRT1. Interacts with host capping enzyme RNGTT; this interaction stimulates RNGTT. Binds to host KDR, and to the host integrins ITGAV/ITGB3 and ITGA5/ITGB1. Interacts with host KPNB1/importin beta-1 without previous binding to KPNA1/importin alpha-1. Interacts with EIF2AK2. Interacts with host nucleosome assembly protein NAP1L1; this interaction may be required for the transport of Tat within the nucleus, since the two proteins interact at the nuclear rim. Interacts with host C1QBP/SF2P32; this interaction involves lysine-acetylated Tat. Interacts with the host chemokine receptors CCR2, CCR3 and CXCR4. Interacts with host DPP4/CD26; this interaction may trigger an anti-proliferative effect. Interacts with host LDLR. Interacts with the host extracellular matrix metalloproteinase MMP1. Interacts with host PRMT6; this interaction mediates Tat's methylation. Interacts with, and is ubiquitinated by MDM2/Hdm2. Interacts with host PSMC3 and HTATIP2. Interacts with STAB1; this interaction may overcome SATB1-mediated repression of IL2 and IL2RA (interleukin) in T cells by binding to the same domain than HDAC1. Interacts (when acetylated) with human CDK13, thereby increasing HIV-1 mRNA splicing and promoting the production of the doubly spliced HIV-1 protein Nef. Interacts with host TBP; this interaction modulates the activity of transcriptional pre-initiation complex. Interacts with host RELA. Interacts with host PLSCR1; this interaction negatively regulates Tat transactivation activity by altering its subcellular distribution. Post-translationally, asymmetrical arginine methylation by host PRMT6 seems to diminish the transactivation capacity of Tat and affects the interaction with host CCNT1. In terms of processing, acetylation by EP300, CREBBP, GCN5L2/GCN5 and PCAF regulates the transactivation activity of Tat. EP300-mediated acetylation of Lys-50 promotes dissociation of Tat from the TAR RNA through the competitive binding to PCAF's bromodomain. In addition, the non-acetylated Tat's N-terminus can also interact with PCAF. PCAF-mediated acetylation of Lys-28 enhances Tat's binding to CCNT1. Lys-50 is deacetylated by SIRT1. Polyubiquitination by host MDM2 does not target Tat to degradation, but activates its transactivation function and fosters interaction with CCNT1 and TAR RNA. Post-translationally, phosphorylated by EIF2AK2 on serine and threonine residues adjacent to the basic region important for TAR RNA binding and function. Phosphorylation of Tat by EIF2AK2 is dependent on the prior activation of EIF2AK2 by dsRNA.

The protein resides in the host nucleus. Its subcellular location is the host nucleolus. The protein localises to the host cytoplasm. It localises to the secreted. Its function is as follows. Transcriptional activator that increases RNA Pol II processivity, thereby increasing the level of full-length viral transcripts. Recognizes a hairpin structure at the 5'-LTR of the nascent viral mRNAs referred to as the transactivation responsive RNA element (TAR) and recruits the cyclin T1-CDK9 complex (P-TEFb complex) that will in turn hyperphosphorylate the RNA polymerase II to allow efficient elongation. The CDK9 component of P-TEFb and other Tat-activated kinases hyperphosphorylate the C-terminus of RNA Pol II that becomes stabilized and much more processive. Other factors such as HTATSF1/Tat-SF1, SUPT5H/SPT5, and HTATIP2 are also important for Tat's function. Besides its effect on RNA Pol II processivity, Tat induces chromatin remodeling of proviral genes by recruiting the histone acetyltransferases (HATs) CREBBP, EP300 and PCAF to the chromatin. This also contributes to the increase in proviral transcription rate, especially when the provirus integrates in transcriptionally silent region of the host genome. To ensure maximal activation of the LTR, Tat mediates nuclear translocation of NF-kappa-B by interacting with host RELA. Through its interaction with host TBP, Tat may also modulate transcription initiation. Tat can reactivate a latently infected cell by penetrating in it and transactivating its LTR promoter. In the cytoplasm, Tat is thought to act as a translational activator of HIV-1 mRNAs. In terms of biological role, extracellular circulating Tat can be endocytosed by surrounding uninfected cells via the binding to several surface receptors such as CD26, CXCR4, heparan sulfate proteoglycans (HSPG) or LDLR. Neurons are rarely infected, but they internalize Tat via their LDLR. Through its interaction with nuclear HATs, Tat is potentially able to control the acetylation-dependent cellular gene expression. Modulates the expression of many cellular genes involved in cell survival, proliferation or in coding for cytokines or cytokine receptors. Tat plays a role in T-cell and neurons apoptosis. Tat induced neurotoxicity and apoptosis probably contribute to neuroAIDS. Circulating Tat also acts as a chemokine-like and/or growth factor-like molecule that binds to specific receptors on the surface of the cells, affecting many cellular pathways. In the vascular system, Tat binds to ITGAV/ITGB3 and ITGA5/ITGB1 integrins dimers at the surface of endothelial cells and competes with bFGF for heparin-binding sites, leading to an excess of soluble bFGF. The protein is Protein Tat of Homo sapiens (Human).